The primary structure comprises 449 residues: UDP-N-acetylmuramoylalanine--D-glutamate ligase (449 aa).

Position 118 to 124 (118 to 124 (GTNGKTT)) interacts with ATP.

It belongs to the MurCDEF family.

It is found in the cytoplasm. It catalyses the reaction UDP-N-acetyl-alpha-D-muramoyl-L-alanine + D-glutamate + ATP = UDP-N-acetyl-alpha-D-muramoyl-L-alanyl-D-glutamate + ADP + phosphate + H(+). It participates in cell wall biogenesis; peptidoglycan biosynthesis. Its function is as follows. Cell wall formation. Catalyzes the addition of glutamate to the nucleotide precursor UDP-N-acetylmuramoyl-L-alanine (UMA). This Staphylococcus carnosus (strain TM300) protein is UDP-N-acetylmuramoylalanine--D-glutamate ligase.